A 146-amino-acid polypeptide reads, in one-letter code: MPLTYHTLKHYLPHRYPFLLVDKIVACTPGECITGIKNVTINEEFFNGHFPDEPIMPGVLMVECMAQVSGVLGFISAGLTAEDGYLYLFAGVDKVRFKRRVIPGDQLIIRSKIVMQKQGIYKFDCTVHVEDELAVSAQIMIARQEQ.

Residue histidine 49 is part of the active site.

Belongs to the thioester dehydratase family. FabZ subfamily.

It is found in the cytoplasm. It carries out the reaction a (3R)-hydroxyacyl-[ACP] = a (2E)-enoyl-[ACP] + H2O. Its function is as follows. Involved in unsaturated fatty acids biosynthesis. Catalyzes the dehydration of short chain beta-hydroxyacyl-ACPs and long chain saturated and unsaturated beta-hydroxyacyl-ACPs. In Psychrobacter arcticus (strain DSM 17307 / VKM B-2377 / 273-4), this protein is 3-hydroxyacyl-[acyl-carrier-protein] dehydratase FabZ.